A 222-amino-acid polypeptide reads, in one-letter code: Putative hemin import ATP-binding protein HrtA (222 aa).

An ABC transporter domain is found at 3-222; the sequence is LVVKDISKTF…QLYDGKIKNS (220 aa). Residue 39–46 coordinates ATP; that stretch reads GASGSGKT.

This sequence belongs to the ABC transporter superfamily. HrtA family. As to quaternary structure, the complex is composed of two ATP-binding proteins (HrtA), two transmembrane proteins (HrtB) and a solute-binding protein.

It localises to the cell membrane. Functionally, part of the ABC transporter complex hrt involved in hemin import. Responsible for energy coupling to the transport system. This chain is Putative hemin import ATP-binding protein HrtA (hrtA), found in Staphylococcus epidermidis (strain ATCC 35984 / DSM 28319 / BCRC 17069 / CCUG 31568 / BM 3577 / RP62A).